A 239-amino-acid polypeptide reads, in one-letter code: ATP-dependent dethiobiotin synthetase BioD (239 aa).

15–20 serves as a coordination point for ATP; that stretch reads EIGKTF. Residue Thr19 coordinates Mg(2+). Lys40 is a catalytic residue. ATP is bound by residues Asp57, 118 to 121, and 178 to 179; these read EGVG and NH. Residues Asp57 and Glu118 each contribute to the Mg(2+) site.

It belongs to the dethiobiotin synthetase family. As to quaternary structure, homodimer. It depends on Mg(2+) as a cofactor.

Its subcellular location is the cytoplasm. It catalyses the reaction (7R,8S)-7,8-diammoniononanoate + CO2 + ATP = (4R,5S)-dethiobiotin + ADP + phosphate + 3 H(+). The protein operates within cofactor biosynthesis; biotin biosynthesis; biotin from 7,8-diaminononanoate: step 1/2. Catalyzes a mechanistically unusual reaction, the ATP-dependent insertion of CO2 between the N7 and N8 nitrogen atoms of 7,8-diaminopelargonic acid (DAPA, also called 7,8-diammoniononanoate) to form a ureido ring. The sequence is that of ATP-dependent dethiobiotin synthetase BioD from Burkholderia orbicola (strain MC0-3).